The primary structure comprises 938 residues: Isoleucine--tRNA ligase (938 aa).

Residues 58–68 (PYANGSIHIGH) carry the 'HIGH' region motif. E561 is a binding site for L-isoleucyl-5'-AMP. A 'KMSKS' region motif is present at residues 602-606 (KMSKS). K605 lines the ATP pocket. Positions 901, 904, 921, and 924 each coordinate Zn(2+).

The protein belongs to the class-I aminoacyl-tRNA synthetase family. IleS type 1 subfamily. In terms of assembly, monomer. It depends on Zn(2+) as a cofactor.

It is found in the cytoplasm. The enzyme catalyses tRNA(Ile) + L-isoleucine + ATP = L-isoleucyl-tRNA(Ile) + AMP + diphosphate. Catalyzes the attachment of isoleucine to tRNA(Ile). As IleRS can inadvertently accommodate and process structurally similar amino acids such as valine, to avoid such errors it has two additional distinct tRNA(Ile)-dependent editing activities. One activity is designated as 'pretransfer' editing and involves the hydrolysis of activated Val-AMP. The other activity is designated 'posttransfer' editing and involves deacylation of mischarged Val-tRNA(Ile). This is Isoleucine--tRNA ligase from Baumannia cicadellinicola subsp. Homalodisca coagulata.